We begin with the raw amino-acid sequence, 373 residues long: sn-glycerol-3-phosphate import ATP-binding protein UgpC 2 (373 aa).

The ABC transporter domain maps to 4-234 (IDIRQVRKSY…PASTFVASFI (231 aa)). Residue 36 to 43 (GPSGCGKS) coordinates ATP.

It belongs to the ABC transporter superfamily. sn-glycerol-3-phosphate importer (TC 3.A.1.1.3) family. As to quaternary structure, the complex is composed of two ATP-binding proteins (UgpC), two transmembrane proteins (UgpA and UgpE) and a solute-binding protein (UgpB).

Its subcellular location is the cell inner membrane. The catalysed reaction is sn-glycerol 3-phosphate(out) + ATP + H2O = sn-glycerol 3-phosphate(in) + ADP + phosphate + H(+). In terms of biological role, part of the ABC transporter complex UgpBAEC involved in sn-glycerol-3-phosphate (G3P) import. Responsible for energy coupling to the transport system. This chain is sn-glycerol-3-phosphate import ATP-binding protein UgpC 2, found in Agrobacterium fabrum (strain C58 / ATCC 33970) (Agrobacterium tumefaciens (strain C58)).